A 747-amino-acid chain; its full sequence is ATPase family gene 2 protein homolog B (747 aa).

Met1 is modified (N-acetylmethionine). ATP is bound by residues 234–241 and 500–507; these read GPPGVGKT and GPPGCAKT.

It belongs to the AAA ATPase family. AFG2 subfamily. As to quaternary structure, part of the 55LCC heterohexameric ATPase complex composed at least of AIRIM, AFG2A, AFG2B and CINP. Associates with pre-60S ribosomal particles. As to expression, expressed in neurons; also expressed at lower level in astrocytes, oligodendrocytes and microglia.

The protein localises to the cytoplasm. It is found in the cytoskeleton. Its subcellular location is the spindle. The protein resides in the nucleus. It carries out the reaction ATP + H2O = ADP + phosphate + H(+). Its activity is regulated as follows. In the context of 55LCC heterohexameric ATPase complex, the ATPase activity is stimulated by DNA binding and inhibited in presence of RNA. Functionally, ATP-dependent chaperone part of the 55LCC heterohexameric ATPase complex which is chromatin-associated and promotes replisome proteostasis to maintain replication fork progression and genome stability. Required for replication fork progression, sister chromatid cohesion, and chromosome stability. The ATPase activity is specifically enhanced by replication fork DNA and is coupled to cysteine protease-dependent cleavage of replisome substrates in response to replication fork damage. Uses ATPase activity to process replisome substrates in S-phase, facilitating their proteolytic turnover from chromatin to ensure DNA replication and mitotic fidelity. Plays an essential role in the cytoplasmic maturation steps of pre-60S ribosomal particles by promoting the release of shuttling protein RSL24D1/RLP24 from the pre-ribosomal particles. The protein is ATPase family gene 2 protein homolog B (Afg2b) of Rattus norvegicus (Rat).